Reading from the N-terminus, the 260-residue chain is Trans-aconitate 2-methyltransferase (260 aa).

This sequence belongs to the methyltransferase superfamily. Tam family.

Its subcellular location is the cytoplasm. It catalyses the reaction trans-aconitate + S-adenosyl-L-methionine = (E)-3-(methoxycarbonyl)pent-2-enedioate + S-adenosyl-L-homocysteine. Functionally, catalyzes the S-adenosylmethionine monomethyl esterification of trans-aconitate. The sequence is that of Trans-aconitate 2-methyltransferase from Methylobacterium radiotolerans (strain ATCC 27329 / DSM 1819 / JCM 2831 / NBRC 15690 / NCIMB 10815 / 0-1).